The primary structure comprises 365 residues: Phosphatidylcholine:ceramide cholinephosphotransferase 4 (365 aa).

The Cytoplasmic segment spans residues 1–44 (MISYPFFSLSPPGLVPPPMAVPPVEMYSGSFWNRMRKPLPLRTQ). Residues 45–65 (VIRFTVVFVIVSFILAVALQI) form a helical membrane-spanning segment. Topologically, residues 66–92 (THERMPDPKVTKPLPDLGFELLTKVPG) are lumenal. The chain crosses the membrane as a helical span at residues 93–113 (MYVLADCCIGFLNILSVFTAF). Topologically, residues 114–165 (KLYLLHRHCVGSGEPELPCNIPGVSRFFLSVWLCKENCRIELRNVHTIAWIR) are cytoplasmic. A helical transmembrane segment spans residues 166–186 (FITSYALLLLFRSVVIVMTSL). Topologically, residues 187-229 (PAPDDLCQDPPKIENPVKNVILTVLTAGGGSIHCGDLMYSGHT) are lumenal. The active site involves H228. The chain crosses the membrane as a helical span at residues 230-250 (VILTLHLMFHWIYGAMVHWSF). A topological domain (cytoplasmic) is located at residue R251. A helical transmembrane segment spans residues 252–272 (PVVTVVAIFGYYCIVASRFHY). Active-site residues include H271 and D275. Residues 273-275 (TDD) are Lumenal-facing. A helical transmembrane segment spans residues 276 to 296 (VLVAIYLTIATFIAVGHNADG). Topologically, residues 297–365 (APWQLQLFIR…ALMFKCGAYV (69 aa)) are cytoplasmic.

It belongs to the sphingomyelin synthase family.

Its subcellular location is the golgi apparatus membrane. The catalysed reaction is an N-acylsphing-4-enine + a 1,2-diacyl-sn-glycero-3-phosphocholine = a sphingomyelin + a 1,2-diacyl-sn-glycerol. In terms of biological role, bidirectional lipid cholinephosphotransferase capable of converting phosphatidylcholine (PC) and ceramide to sphingomyelin (SM) and diacylglycerol (DAG) and vice versa. Direction is dependent on the relative concentrations of DAG and ceramide as phosphocholine acceptors. Directly and specifically recognizes the choline head group on the substrate. Also requires two fatty chains on the choline-P donor molecule in order to be recognized efficiently as a substrate. Does not function strictly as a SM synthase. Essential for viability of the pathogenic bloodstream stage of this human protozoan parasite and, consequently, can be considered as potential drug target. The polypeptide is Phosphatidylcholine:ceramide cholinephosphotransferase 4 (Trypanosoma brucei brucei (strain 927/4 GUTat10.1)).